The chain runs to 397 residues: Succinyl-diaminopimelate desuccinylase (397 aa).

H73 serves as a coordination point for Zn(2+). D75 is a catalytic residue. D106 provides a ligand contact to Zn(2+). The active-site Proton acceptor is E140. The Zn(2+) site is built by E141, E169, and H366.

It belongs to the peptidase M20A family. DapE subfamily. In terms of assembly, homodimer. The cofactor is Zn(2+). Co(2+) serves as cofactor.

The catalysed reaction is N-succinyl-(2S,6S)-2,6-diaminopimelate + H2O = (2S,6S)-2,6-diaminopimelate + succinate. It functions in the pathway amino-acid biosynthesis; L-lysine biosynthesis via DAP pathway; LL-2,6-diaminopimelate from (S)-tetrahydrodipicolinate (succinylase route): step 3/3. Functionally, catalyzes the hydrolysis of N-succinyl-L,L-diaminopimelic acid (SDAP), forming succinate and LL-2,6-diaminopimelate (DAP), an intermediate involved in the bacterial biosynthesis of lysine and meso-diaminopimelic acid, an essential component of bacterial cell walls. The polypeptide is Succinyl-diaminopimelate desuccinylase (Rhizobium meliloti (strain 1021) (Ensifer meliloti)).